The chain runs to 303 residues: Probable serine/threonine-protein kinase FPV212 (303 aa).

One can recognise a Protein kinase domain in the interval 25 to 303; it reads WILGKQLGSG…NYESLKQMFL (279 aa). ATP-binding positions include 31-39 and K54; that span reads LGSGGFGLV. D160 (proton acceptor) is an active-site residue.

It belongs to the protein kinase superfamily. Ser/Thr protein kinase family. Poxviruses subfamily.

The catalysed reaction is L-seryl-[protein] + ATP = O-phospho-L-seryl-[protein] + ADP + H(+). It catalyses the reaction L-threonyl-[protein] + ATP = O-phospho-L-threonyl-[protein] + ADP + H(+). This is Probable serine/threonine-protein kinase FPV212 from Vertebrata (FPV).